We begin with the raw amino-acid sequence, 152 residues long: Ribonuclease H (152 aa).

The RNase H type-1 domain maps to 1-142 (MGSKVVIYTD…ADKLAVQGRE (142 aa)). Mg(2+)-binding residues include Asp10, Glu48, Asp70, and Asp134.

It belongs to the RNase H family. Monomer. Mg(2+) is required as a cofactor.

Its subcellular location is the cytoplasm. The enzyme catalyses Endonucleolytic cleavage to 5'-phosphomonoester.. In terms of biological role, endonuclease that specifically degrades the RNA of RNA-DNA hybrids. This Rickettsia massiliae (strain Mtu5) protein is Ribonuclease H.